The following is a 306-amino-acid chain: Polyisoprenyl-teichoic acid--peptidoglycan teichoic acid transferase TagU (306 aa).

Over 1-11 the chain is Cytoplasmic; that stretch reads MRAEKRKKKKK. The chain crosses the membrane as a helical; Signal-anchor for type II membrane protein span at residues 12 to 32; sequence ILYTIIALIGIFVLSTGSYAY. The Extracellular portion of the chain corresponds to 33-306; that stretch reads YLWHKAASTV…TAELKESLNK (274 aa).

Belongs to the LytR/CpsA/Psr (LCP) family.

It localises to the cell membrane. It participates in cell wall biogenesis. In terms of biological role, may catalyze the final step in cell wall teichoic acid biosynthesis, the transfer of the anionic cell wall polymers (APs) from their lipid-linked precursor to the cell wall peptidoglycan (PG). In Bacillus licheniformis (strain ATCC 14580 / DSM 13 / JCM 2505 / CCUG 7422 / NBRC 12200 / NCIMB 9375 / NCTC 10341 / NRRL NRS-1264 / Gibson 46), this protein is Polyisoprenyl-teichoic acid--peptidoglycan teichoic acid transferase TagU.